A 206-amino-acid chain; its full sequence is Ras-related protein RABG3d (206 aa).

15 to 22 is a binding site for GTP; sequence GDSGVGKT. An Effector region motif is present at residues 37-45; it reads YKATIGADF. GTP contacts are provided by residues 63-67, 125-128, and 158-159; these read DTAGQ, NKTD, and SA. S-geranylgeranyl cysteine attachment occurs at residues Cys204 and Cys206. The residue at position 206 (Cys206) is a Cysteine methyl ester.

The protein belongs to the small GTPase superfamily. Rab family.

The protein localises to the cell membrane. Its function is as follows. Intracellular vesicle trafficking and protein transport. This chain is Ras-related protein RABG3d (RABG3D), found in Arabidopsis thaliana (Mouse-ear cress).